The primary structure comprises 363 residues: AA9 family lytic polysaccharide monooxygenase I (363 aa).

The signal sequence occupies residues 1-19 (MSLFKFAAFVLGTAGSVAG). The Cu(2+) site is built by His-20 and His-105. 2 cysteine pairs are disulfide-bonded: Cys-75-Cys-197 and Cys-116-Cys-120. Residues His-183 and Gln-192 each contribute to the O2 site. Tyr-194 serves as a coordination point for Cu(2+). Positions 248–257 (GSDSNTATSG) are enriched in polar residues. 2 disordered regions span residues 248–270 (GSDS…PTTT) and 298–363 (SVSY…RTQS). Positions 258-270 (ASPPSTNFSPTTT) are enriched in low complexity. Residues 298-307 (SVSYSQTPWP) are compositionally biased toward polar residues. A compositionally biased stretch (low complexity) spans 308–329 (SSTATEATSASSSAGGSNNGHT). Residues 342-354 (TGKKRSRLNRRRM) show a composition bias toward basic residues.

It belongs to the polysaccharide monooxygenase AA9 family. Cu(2+) is required as a cofactor.

The protein localises to the secreted. The catalysed reaction is [(1-&gt;4)-beta-D-glucosyl]n+m + reduced acceptor + O2 = 4-dehydro-beta-D-glucosyl-[(1-&gt;4)-beta-D-glucosyl]n-1 + [(1-&gt;4)-beta-D-glucosyl]m + acceptor + H2O.. In terms of biological role, lytic polysaccharide monooxygenase (LPMO) that depolymerizes crystalline and amorphous polysaccharides via the oxidation of scissile alpha- or beta-(1-4)-glycosidic bonds, yielding C1 or C4 oxidation products. Catalysis by LPMOs requires the reduction of the active-site copper from Cu(II) to Cu(I) by a reducing agent and H(2)O(2) or O(2) as a cosubstrate. The sequence is that of AA9 family lytic polysaccharide monooxygenase I from Emericella nidulans (strain FGSC A4 / ATCC 38163 / CBS 112.46 / NRRL 194 / M139) (Aspergillus nidulans).